The primary structure comprises 36 residues: Hemoglobin subunit beta (36 aa).

The 36-residue stretch at 1–36 (VCVLAHHFGKEFTPQVQAAYQKVVAGVANALAHKYH) folds into the Globin domain. Lys-34 carries the post-translational modification N6-acetyllysine.

It belongs to the globin family. Heterotetramer of two alpha chains and two beta chains. As to expression, red blood cells.

Functionally, involved in oxygen transport from the lung to the various peripheral tissues. The polypeptide is Hemoglobin subunit beta (HBB) (Pongo pygmaeus (Bornean orangutan)).